Consider the following 315-residue polypeptide: Methionyl-tRNA formyltransferase (315 aa).

110–113 (SLLP) provides a ligand contact to (6S)-5,6,7,8-tetrahydrofolate.

The protein belongs to the Fmt family.

The enzyme catalyses L-methionyl-tRNA(fMet) + (6R)-10-formyltetrahydrofolate = N-formyl-L-methionyl-tRNA(fMet) + (6S)-5,6,7,8-tetrahydrofolate + H(+). Attaches a formyl group to the free amino group of methionyl-tRNA(fMet). The formyl group appears to play a dual role in the initiator identity of N-formylmethionyl-tRNA by promoting its recognition by IF2 and preventing the misappropriation of this tRNA by the elongation apparatus. This chain is Methionyl-tRNA formyltransferase, found in Mycolicibacterium paratuberculosis (strain ATCC BAA-968 / K-10) (Mycobacterium paratuberculosis).